The following is a 645-amino-acid chain: 1-deoxy-D-xylulose-5-phosphate synthase 1 (645 aa).

Thiamine diphosphate is bound by residues histidine 79 and 120 to 122 (GHS). Residue aspartate 151 coordinates Mg(2+). Thiamine diphosphate is bound by residues 152-153 (GS), asparagine 180, tyrosine 291, and glutamate 373. Mg(2+) is bound at residue asparagine 180.

This sequence belongs to the transketolase family. DXPS subfamily. As to quaternary structure, homodimer. It depends on Mg(2+) as a cofactor. Thiamine diphosphate serves as cofactor.

It catalyses the reaction D-glyceraldehyde 3-phosphate + pyruvate + H(+) = 1-deoxy-D-xylulose 5-phosphate + CO2. Its pathway is metabolic intermediate biosynthesis; 1-deoxy-D-xylulose 5-phosphate biosynthesis; 1-deoxy-D-xylulose 5-phosphate from D-glyceraldehyde 3-phosphate and pyruvate: step 1/1. Functionally, catalyzes the acyloin condensation reaction between C atoms 2 and 3 of pyruvate and glyceraldehyde 3-phosphate to yield 1-deoxy-D-xylulose-5-phosphate (DXP). In Rhodospirillum rubrum (strain ATCC 11170 / ATH 1.1.1 / DSM 467 / LMG 4362 / NCIMB 8255 / S1), this protein is 1-deoxy-D-xylulose-5-phosphate synthase 1.